Consider the following 542-residue polypeptide: Dihydropyrimidinase (542 aa).

The Zn(2+) site is built by histidine 62, histidine 64, and lysine 167. An N6-carboxylysine modification is found at lysine 167. Tyrosine 172 provides a ligand contact to substrate. 2 residues coordinate Zn(2+): histidine 199 and histidine 255. Residue serine 331 participates in substrate binding. Residue aspartate 358 coordinates Zn(2+). Asparagine 392 is a substrate binding site.

It belongs to the metallo-dependent hydrolases superfamily. Hydantoinase/dihydropyrimidinase family. In terms of assembly, homotetramer. Requires Zn(2+) as cofactor. Post-translationally, carboxylation allows a single lysine to coordinate two zinc ions.

The catalysed reaction is 5,6-dihydrouracil + H2O = 3-(carbamoylamino)propanoate + H(+). In terms of biological role, catalyzes the second step of the reductive pyrimidine degradation, the reversible hydrolytic ring opening of dihydropyrimidines. Can catalyze the ring opening of 5,6-dihydrouracil to N-carbamyl-alanine and of 5,6-dihydrothymine to N-carbamyl-amino isobutyrate. This chain is Dihydropyrimidinase (PYD2), found in Lachancea kluyveri (strain ATCC 58438 / CBS 3082 / BCRC 21498 / NBRC 1685 / JCM 7257 / NCYC 543 / NRRL Y-12651) (Yeast).